A 587-amino-acid chain; its full sequence is MAKDIFPRRPIQRPHASIEVDSSGIGGSASNSEKILCLIGKAEGGEPNTVYQVRNYAQAKSVFRSGELLDAIELAWGSNPQYTAGKILAMRVEDAKASQLEKGGLRVTSKIFGSVSNDIQVALEKNTITDSLRLRVVFQKDNYQEVFDNLGNIFSINYKGEGEKATFSVEKDKETQEAKRLVLKVDEKEVKAYELNGGAYSFTNEIITDINELPDFEAKLSPFGDKNLESRKLDEATDVDIKGKAVYVKAVFGDIENQTQYNQYVKFEQLPEQASEPSDVEVHAETESATVTATSKPKAIEPFELTKLSGGTNGEPPTSWSAKLEKFKNEGGYYIVPLTDRQSVHSEVATFVKNRSDAGEPMRAIVGGGTSETKEKLFGRQAILNNPRVALVANSGKFVMGNGRILQAPAYMVASAVAGLVSGLDIGESITFKPLFVNSLDKVYESEELDELNENGIITIEFVRNRMTTMFRIVDDVTTFPDKNDPVKSEMALGEANDFLVSELKILLEEQYIGTRTINTSASQIKDFVQSYLGRKKRDNEIQDFPPEDVQVIIEGNEARISLTIFPIRALKKISVSLVYRQQTLQA.

The protein belongs to the myoviridae tail sheath protein family. Homomultimer.

It localises to the virion. It is found in the host cytoplasm. Its function is as follows. Polymerizes as an extended structure around the baseplate-tail tube complex. During ejection, the sheath shifts to a contracted form, thereby making the inner tail tube protrude through the host cell envelope. This chain is Tail sheath protein, found in Staphylococcus phage Twort (strain DSM 17442 / HER 48) (Bacteriophage Twort).